We begin with the raw amino-acid sequence, 484 residues long: Antibiotic efflux pump outer membrane protein ArpC (484 aa).

The signal sequence occupies residues 1–17; it reads MTKSLLSLAVTAFILGG. Residue cysteine 18 is the site of N-palmitoyl cysteine attachment. The S-diacylglycerol cysteine moiety is linked to residue cysteine 18.

The protein belongs to the outer membrane factor (OMF) (TC 1.B.17) family.

Its subcellular location is the cell outer membrane. In terms of biological role, the outer membrane component of an antibiotic efflux pump. Confers resistance to numerous structurally unrelated antibiotics such as carbenicillin, chloramphenicol, erythromycin, novobiocin, streptomycin and tetracycline. Is not involved in organic solvent efflux. The protein is Antibiotic efflux pump outer membrane protein ArpC (arpC) of Pseudomonas putida (Arthrobacter siderocapsulatus).